The chain runs to 132 residues: Small ribosomal subunit protein uS8 (132 aa).

The protein belongs to the universal ribosomal protein uS8 family. As to quaternary structure, part of the 30S ribosomal subunit. Contacts proteins S5 and S12.

One of the primary rRNA binding proteins, it binds directly to 16S rRNA central domain where it helps coordinate assembly of the platform of the 30S subunit. The sequence is that of Small ribosomal subunit protein uS8 from Streptococcus sanguinis (strain SK36).